The chain runs to 172 residues: Protein GrpE (172 aa).

The tract at residues 1-24 (MNQDHPEFDSEDLAQNPPETDPLK) is disordered.

It belongs to the GrpE family. Homodimer.

Its subcellular location is the cytoplasm. Its function is as follows. Participates actively in the response to hyperosmotic and heat shock by preventing the aggregation of stress-denatured proteins, in association with DnaK and GrpE. It is the nucleotide exchange factor for DnaK and may function as a thermosensor. Unfolded proteins bind initially to DnaJ; upon interaction with the DnaJ-bound protein, DnaK hydrolyzes its bound ATP, resulting in the formation of a stable complex. GrpE releases ADP from DnaK; ATP binding to DnaK triggers the release of the substrate protein, thus completing the reaction cycle. Several rounds of ATP-dependent interactions between DnaJ, DnaK and GrpE are required for fully efficient folding. This is Protein GrpE from Xanthomonas oryzae pv. oryzae (strain PXO99A).